We begin with the raw amino-acid sequence, 338 residues long: Ketol-acid reductoisomerase (NADP(+)) (338 aa).

Positions 1-181 (MKVYYDKDAD…GGGKAGIIET (181 aa)) constitute a KARI N-terminal Rossmann domain. Residues 24–27 (YGSQ), arginine 47, and serine 52 each bind NADP(+). Residue histidine 107 is part of the active site. Residue glycine 133 coordinates NADP(+). The KARI C-terminal knotted domain occupies 182-327 (NFREETETDL…EKLRAMMPWI (146 aa)). Residues aspartate 190, glutamate 194, glutamate 226, and glutamate 230 each coordinate Mg(2+). A substrate-binding site is contributed by serine 251.

It belongs to the ketol-acid reductoisomerase family. Mg(2+) serves as cofactor.

It catalyses the reaction (2R)-2,3-dihydroxy-3-methylbutanoate + NADP(+) = (2S)-2-acetolactate + NADPH + H(+). It carries out the reaction (2R,3R)-2,3-dihydroxy-3-methylpentanoate + NADP(+) = (S)-2-ethyl-2-hydroxy-3-oxobutanoate + NADPH + H(+). It participates in amino-acid biosynthesis; L-isoleucine biosynthesis; L-isoleucine from 2-oxobutanoate: step 2/4. It functions in the pathway amino-acid biosynthesis; L-valine biosynthesis; L-valine from pyruvate: step 2/4. Its function is as follows. Involved in the biosynthesis of branched-chain amino acids (BCAA). Catalyzes an alkyl-migration followed by a ketol-acid reduction of (S)-2-acetolactate (S2AL) to yield (R)-2,3-dihydroxy-isovalerate. In the isomerase reaction, S2AL is rearranged via a Mg-dependent methyl migration to produce 3-hydroxy-3-methyl-2-ketobutyrate (HMKB). In the reductase reaction, this 2-ketoacid undergoes a metal-dependent reduction by NADPH to yield (R)-2,3-dihydroxy-isovalerate. This is Ketol-acid reductoisomerase (NADP(+)) from Methylibium petroleiphilum (strain ATCC BAA-1232 / LMG 22953 / PM1).